The following is a 1021-amino-acid chain: Caspase recruitment domain-containing protein 10 (1021 aa).

The interval 1 to 24 (MQGRADAGEADEEAGAGSGSEAEE) is disordered. Residue S18 is modified to Phosphoserine. The 93-residue stretch at 23-115 (EEDALWERIE…EHFTLLTGQE (93 aa)) folds into the CARD domain. The stretch at 138-450 (TEVRRLREAR…LEAQLQRTQG (313 aa)) forms a coiled coil. 3 disordered regions span residues 475–544 (EFPS…MSDI), 597–616 (SPPAGLDPQDKSPDSMPGLG), and 790–809 (LVRPKPAGGTAGDSAEQLPA). 2 stretches are compositionally biased toward basic and acidic residues: residues 495 to 508 (HTSEEATDSEKEIN) and 525 to 535 (RQREEDPEPPK).

As to quaternary structure, CARD10 and BCL10 bind to each other by CARD-CARD interaction. They both participate in a complex with MALT1, where MALT1 binds to BCL10. Interacts with TMEM43; this interaction is essential for EGFR-mediated NF-kappa-B activation. As to expression, highly expressed in kidney, heart followed by brain, lung, liver, skeletal muscle and testis.

In terms of biological role, scaffold protein that plays an important role in mediating the activation of NF-kappa-B via BCL10 or EGFR. This Mus musculus (Mouse) protein is Caspase recruitment domain-containing protein 10 (Card10).